Consider the following 517-residue polypeptide: ATP synthase subunit alpha (517 aa).

174–181 (GDRQTGKT) is a binding site for ATP.

Belongs to the ATPase alpha/beta chains family. As to quaternary structure, F-type ATPases have 2 components, CF(1) - the catalytic core - and CF(0) - the membrane proton channel. CF(1) has five subunits: alpha(3), beta(3), gamma(1), delta(1), epsilon(1). CF(0) has three main subunits: a(1), b(2) and c(9-12). The alpha and beta chains form an alternating ring which encloses part of the gamma chain. CF(1) is attached to CF(0) by a central stalk formed by the gamma and epsilon chains, while a peripheral stalk is formed by the delta and b chains.

Its subcellular location is the cell inner membrane. The catalysed reaction is ATP + H2O + 4 H(+)(in) = ADP + phosphate + 5 H(+)(out). Its function is as follows. Produces ATP from ADP in the presence of a proton gradient across the membrane. The alpha chain is a regulatory subunit. This is ATP synthase subunit alpha from Delftia acidovorans (strain DSM 14801 / SPH-1).